We begin with the raw amino-acid sequence, 492 residues long: Glycosyltransferase alg8 (492 aa).

4 helical membrane-spanning segments follow: residues glycine 13 to valine 32, isoleucine 47 to valine 69, leucine 379 to valine 401, and proline 421 to phenylalanine 443.

It belongs to the glycosyltransferase 2 family.

Its subcellular location is the cell membrane. Its pathway is glycan biosynthesis; alginate biosynthesis. Its function is as follows. Possibly a processive enzyme that polymerizes GDP-mannuronic acid. The protein is Glycosyltransferase alg8 (alg8) of Azotobacter vinelandii.